Here is a 90-residue protein sequence, read N- to C-terminus: Probable small nuclear ribonucleoprotein F (90 aa).

One can recognise a Sm domain in the interval 7–80 (NPRPFLQDLV…VLYIKKADEA (74 aa)).

Belongs to the snRNP Sm proteins family. SmF/LSm6 subfamily.

The protein resides in the nucleus. The protein localises to the cytoplasm. Plays a role in pre-mRNA splicing as a core component of the spliceosomal U1, U2, U4 and U5 small nuclear ribonucleoproteins (snRNPs), the building blocks of the spliceosome. The protein is Probable small nuclear ribonucleoprotein F of Neurospora crassa (strain ATCC 24698 / 74-OR23-1A / CBS 708.71 / DSM 1257 / FGSC 987).